The sequence spans 349 residues: Phosphoribosylformylglycinamidine cyclo-ligase (349 aa).

The protein belongs to the AIR synthase family.

It localises to the cytoplasm. The enzyme catalyses 2-formamido-N(1)-(5-O-phospho-beta-D-ribosyl)acetamidine + ATP = 5-amino-1-(5-phospho-beta-D-ribosyl)imidazole + ADP + phosphate + H(+). It participates in purine metabolism; IMP biosynthesis via de novo pathway; 5-amino-1-(5-phospho-D-ribosyl)imidazole from N(2)-formyl-N(1)-(5-phospho-D-ribosyl)glycinamide: step 2/2. The chain is Phosphoribosylformylglycinamidine cyclo-ligase from Lawsonia intracellularis (strain PHE/MN1-00).